Consider the following 369-residue polypeptide: METVKELVQFMQPNQRLDLKAVALTHVLGLTGSSEGKSAILSLDEMLMAIFGLTFDANQTVAKDAVLSLINLTSEEEAAIKVFQLAKQLQPPFAIVEVAAKEITNEQSDLADPWSMVLSNLTRVESLVHEILDTLERDDHTLPRLAKAFAQLDYNKKKAKLHYLAPIFCNLTQVSRGRELCCHRKYELLEKLLPFASFEGSVVRRGGTIGILKNVCFDTVYHDVILNEQSSILVAILQPLCGPEEFSDEDNELLPIELQYLPESKTREEDPDLRKMLLECLLQLCSTRRSREILRSRGVYEILREYHKWEAKVGKDSDCLLACENVVDILIKKEEEIGLDNYKTEVEVPAEQSEKFVQEDAAYVKSLLD.

The protein belongs to the HGH1 family.

The chain is Protein HGH1 homolog from Drosophila melanogaster (Fruit fly).